Reading from the N-terminus, the 314-residue chain is Homoserine kinase (314 aa).

An ATP-binding site is contributed by 95–105; the sequence is PHSRGLGSSAA.

This sequence belongs to the GHMP kinase family. Homoserine kinase subfamily.

The protein resides in the cytoplasm. It catalyses the reaction L-homoserine + ATP = O-phospho-L-homoserine + ADP + H(+). Its pathway is amino-acid biosynthesis; L-threonine biosynthesis; L-threonine from L-aspartate: step 4/5. Its function is as follows. Catalyzes the ATP-dependent phosphorylation of L-homoserine to L-homoserine phosphate. The polypeptide is Homoserine kinase (Mycobacterium sp. (strain KMS)).